Here is a 653-residue protein sequence, read N- to C-terminus: Protein fem-1 homolog A (653 aa).

7 ANK repeats span residues 2-31, 40-70, 82-111, 115-145, 149-178, 182-211, and 214-243; these read DLHT…REEL, SGGT…SVEA, EGAP…SVNR, TNST…DLEV, HGHT…QVNR, KGNT…RMER, and YGMT…AGDE. Serine 108 bears the Phosphoserine mark. The tract at residues 242–274 is disordered; it reads DEQAQPGLARVQPQGARSSPEEPPSGESYESCC. 2 TPR repeats span residues 282 to 316 and 374 to 407; these read VEAL…RHQG and SYYI…QQNN. ANK repeat units follow at residues 518–560 and 564–593; these read NGFT…DPDS and DNNT…HMDA.

This sequence belongs to the fem-1 family. As to quaternary structure, component of a CRL2 E3 ubiquitin-protein ligase complex, also named ECS (Elongin BC-CUL2/5-SOCS-box protein) complex, composed of CUL2, Elongin BC (ELOB and ELOC), RBX1 and substrate-specific adapter FEM1A. Interacts with PTGER4. Interacts with NFKB1; the interaction is direct. In terms of processing, phosphorylated; highly phosphorylated in myoblasts and myotubes. Phosphorylation at Ser-108 promotes PGE2-EP4-mediated inhibition of inflammation. Dephosphorylated by protein phosphatase 2A (PP2A).

The protein localises to the mitochondrion. Its subcellular location is the cytoplasm. It functions in the pathway protein modification; protein ubiquitination. Functionally, substrate-recognition component of a Cul2-RING (CRL2) E3 ubiquitin-protein ligase complex of the DesCEND (destruction via C-end degrons) pathway, which recognizes a C-degron located at the extreme C terminus of target proteins, leading to their ubiquitination and degradation. The C-degron recognized by the DesCEND pathway is usually a motif of less than ten residues and can be present in full-length proteins, truncated proteins or proteolytically cleaved forms. The CRL2(FEM1A) complex specifically recognizes proteins with an arginine at the C-terminus: recognizes and binds proteins ending with -Lys/Arg-Xaa-Arg and -Lys/Arg-Xaa-Xaa-Arg C-degrons, such as SIL1 or OR51B2, leading to their ubiquitination and degradation. Involved in PGE2-EP4-mediated inhibition of inflammation of macrophages via interaction with NFKB1 and PTGER4. Promotes inflammation in brain microglia through MAP2K4/MKK4-mediated signaling. This is Protein fem-1 homolog A from Bos taurus (Bovine).